Here is an 878-residue protein sequence, read N- to C-terminus: MPEEYIMSSKACIYVLGGAANTAALFDFDGVYILDGGFAEKNPGFVAHVRDVSAVLLAAPTLGNLGTTSALLEQGKPLPVFTNTKPFKTAKPGSSGEIAKAIQEANSKILSVAPPLFNPKYPANIIYQSAAKGVLSLYILAGDVKDAEVITKALAGGNEAEVEKAAAEHGTIGVLLWRPAMTDQSVVRVLISGTSSLSRIQQSLDKAAKSLPFLNVPTVKSKDALSDIPAPAVPRPVAGKPSARPATTTGTATRPTRPAVPAASAPRALTSRAPAGPSRPTTTRNAAPAPRTAVPSRATVLTKTAPASKAPTRAPVPARSAPAPPRGAPAKPAANTAKAEPIAQKKTVGKVQGTAPSKPAPAAPASAATSPAPAPEAPRRDPNNVTIVLDDSLSPEDFNQGSAPMDIVVIPPTPEPPRHEVAQATHPEESIIDAEDLAKAPLEVDDVANLADVEDEIPPPVDAFKKPEPHPEPNVSGGSEEDKIPEPVDAFKKPDPVELDDFDPLKPSHPEPSAPVVPSDHIIIATPDPELPDIVAAVPFVSPSPKGPNDGLVKLDDELEKIAPGFEEPLIPQAPRDDGTLAECSEEVSKLVEISMDTDNSAEVAADLAKAVGEVTQLSADLQNLGLDEKTDEYVRKLSNQMIEDATLPFTSALASSIVTSNGSETNGHGEQAHAAQNGGIDHQKEIPKHDLMQSRSSVIENGAAVQYEKTDPALDDVLNACAQESEKIDASHPDNLHMPAAPGSAAPAKPVKFARPYYFDVVTVPRNEKLETSVAADGLQEFISKVRSRNVILASKDISGEQLQAILCGKQTWCDSAHPCNVIPTHSSPMLLDFRQKNEEQFAANNLQFSIPVEKQRTTVSSDAGAIEYELARVDLL.

Disordered regions lie at residues 224–425 and 456–518; these read ALSD…AQAT and EIPP…PVVP. Low complexity-rich tracts occupy residues 241–268, 278–293, 310–321, and 328–339; these read PSAR…APRA, SRPT…PRTA, APTRAPVPARSA, and APAKPAANTAKA. 2 stretches are compositionally biased toward basic and acidic residues: residues 416 to 425 and 480 to 496; these read PPRHEVAQAT and EEDK…KPDP.

It belongs to the MAP1A/MAP1B/MAP1S family. In terms of assembly, interacts with dlg-1.

The protein localises to the cell projection. It is found in the dendrite. Its subcellular location is the perikaryon. The protein resides in the axon. It localises to the cytoplasm. The protein localises to the cytoskeleton. The sequence is that of Microtubule-associated protein homolog maph-1.1 from Caenorhabditis elegans.